The sequence spans 179 residues: Large ribosomal subunit protein uL5 (179 aa).

The protein belongs to the universal ribosomal protein uL5 family. Part of the 50S ribosomal subunit; part of the 5S rRNA/L5/L18/L25 subcomplex. Contacts the 5S rRNA and the P site tRNA. Forms a bridge to the 30S subunit in the 70S ribosome.

In terms of biological role, this is one of the proteins that bind and probably mediate the attachment of the 5S RNA into the large ribosomal subunit, where it forms part of the central protuberance. In the 70S ribosome it contacts protein S13 of the 30S subunit (bridge B1b), connecting the 2 subunits; this bridge is implicated in subunit movement. Contacts the P site tRNA; the 5S rRNA and some of its associated proteins might help stabilize positioning of ribosome-bound tRNAs. In Citrobacter koseri (strain ATCC BAA-895 / CDC 4225-83 / SGSC4696), this protein is Large ribosomal subunit protein uL5.